Consider the following 115-residue polypeptide: UPF0102 protein Swol_1475 (115 aa).

This sequence belongs to the UPF0102 family.

This Syntrophomonas wolfei subsp. wolfei (strain DSM 2245B / Goettingen) protein is UPF0102 protein Swol_1475.